A 246-amino-acid polypeptide reads, in one-letter code: Small ribosomal subunit protein uS2 (246 aa).

Positions 224–246 (AKQGEESAETEAKEAETTETTTA) are disordered. Residues 225–239 (KQGEESAETEAKEAE) show a composition bias toward basic and acidic residues.

Belongs to the universal ribosomal protein uS2 family.

In Bacillus licheniformis (strain ATCC 14580 / DSM 13 / JCM 2505 / CCUG 7422 / NBRC 12200 / NCIMB 9375 / NCTC 10341 / NRRL NRS-1264 / Gibson 46), this protein is Small ribosomal subunit protein uS2.